The primary structure comprises 213 residues: Golgi apparatus membrane protein TVP23 homolog A (213 aa).

4 helical membrane passes run 32–52, 54–74, 123–143, and 150–170; these read PLAT…YVSC, WFSK…SLDF, IFWL…FSTL, and WLAL…GYIL.

This sequence belongs to the TVP23 family.

Its subcellular location is the membrane. The chain is Golgi apparatus membrane protein TVP23 homolog A (TVP23A) from Homo sapiens (Human).